A 359-amino-acid polypeptide reads, in one-letter code: Peptide chain release factor 1 (359 aa).

An N5-methylglutamine modification is found at Q236.

This sequence belongs to the prokaryotic/mitochondrial release factor family. Post-translationally, methylated by PrmC. Methylation increases the termination efficiency of RF1.

It localises to the cytoplasm. Functionally, peptide chain release factor 1 directs the termination of translation in response to the peptide chain termination codons UAG and UAA. The chain is Peptide chain release factor 1 from Streptococcus thermophilus (strain ATCC BAA-250 / LMG 18311).